The primary structure comprises 79 residues: Alpha-actitoxin-Ms11a-4 (79 aa).

Residues 1–23 (MKVLVAVLVFALLMCMFVDIAES) form the signal peptide. The propeptide occupies 24-46 (RRRDNPEYPSGLRYDEEMGVFKR). Intrachain disulfides connect Cys47–Cys61, Cys54–Cys67, and Cys60–Cys76. The residue at position 78 (Tyr78) is a Tyrosine amide.

Its subcellular location is the secreted. The protein resides in the nematocyst. Alpha-toxins act on postsynaptic membranes, they bind to the nicotinic acetylcholine receptors (nAChR) and thus inhibit them. This toxin very weakly competes with alpha-bungarotoxin for binding to orthosteric sites on muscle-type T.carlifornicus (IC(50)=14.95 uM) and human alpha-7/CHRNA7 nAChRs (IC(50)&gt;45 uM). This chain is Alpha-actitoxin-Ms11a-4, found in Metridium senile (Brown sea anemone).